A 229-amino-acid chain; its full sequence is Putative N-acetylmannosamine-6-phosphate 2-epimerase (229 aa).

This sequence belongs to the NanE family.

The catalysed reaction is an N-acyl-D-glucosamine 6-phosphate = an N-acyl-D-mannosamine 6-phosphate. Its pathway is amino-sugar metabolism; N-acetylneuraminate degradation; D-fructose 6-phosphate from N-acetylneuraminate: step 3/5. In terms of biological role, converts N-acetylmannosamine-6-phosphate (ManNAc-6-P) to N-acetylglucosamine-6-phosphate (GlcNAc-6-P). The chain is Putative N-acetylmannosamine-6-phosphate 2-epimerase from Actinobacillus pleuropneumoniae serotype 3 (strain JL03).